Reading from the N-terminus, the 435-residue chain is Thiosulfate sulfurtransferase YnjE (435 aa).

The N-terminal stretch at 1-23 (MKRVSQMTALAMALGLACASSWA) is a signal peptide. 3 Rhodanese domains span residues 36–138 (QQQN…RLQK), 164–270 (PAGD…PVER), and 304–425 (HRQD…NPVA). Cysteine 385 acts as the Cysteine persulfide intermediate in catalysis. Arginine 390 contributes to the substrate binding site.

As to quaternary structure, monomer.

It localises to the periplasm. It carries out the reaction thiosulfate + hydrogen cyanide = thiocyanate + sulfite + 2 H(+). This Escherichia coli (strain K12) protein is Thiosulfate sulfurtransferase YnjE (ynjE).